The following is a 273-amino-acid chain: Phosphonates import ATP-binding protein PhnC (273 aa).

Residues 2–245 form the ABC transporter domain; the sequence is LRIDKLTKRF…VAREIYGADA (244 aa). Residue 34–41 coordinates ATP; the sequence is GRSGAGKS.

The protein belongs to the ABC transporter superfamily. Phosphonates importer (TC 3.A.1.9.1) family. In terms of assembly, the complex is composed of two ATP-binding proteins (PhnC), two transmembrane proteins (PhnE) and a solute-binding protein (PhnD).

The protein localises to the cell inner membrane. The catalysed reaction is phosphonate(out) + ATP + H2O = phosphonate(in) + ADP + phosphate + H(+). Functionally, part of the ABC transporter complex PhnCDE involved in phosphonates import. Responsible for energy coupling to the transport system. This chain is Phosphonates import ATP-binding protein PhnC, found in Ruegeria pomeroyi (strain ATCC 700808 / DSM 15171 / DSS-3) (Silicibacter pomeroyi).